The sequence spans 166 residues: Twist-related protein (166 aa).

Residues 1-18 are compositionally biased toward low complexity; sequence MMQEESSSPVSPVDSLSN. The interval 1–83 is disordered; sequence MMQEESSSPV…RVMANVRERQ (83 aa). A compositionally biased stretch (basic residues) spans 28 to 39; sequence SKRGCRKRRSAR. The segment covering 57 to 75 has biased composition (polar residues); the sequence is ASSTGSSPQSFEELQSQRV. One can recognise a bHLH domain in the interval 72–123; it reads SQRVMANVRERQRTQSLNEAFSSLRKIIPTLPSDKLSKIQTLKLASRYIDFL.

As to quaternary structure, efficient DNA binding requires dimerization with another bHLH protein. Homodimer. Subset of mesodermal cells.

Its subcellular location is the nucleus. Functionally, probable transcription factor, which may be involved, with other proteins, in establishing the pattern of cell type-specific gene expression in mesodermal cell subgroups. The polypeptide is Twist-related protein (twist1) (Xenopus laevis (African clawed frog)).